The primary structure comprises 445 residues: Glutamate--tRNA ligase 2 (445 aa).

The 'HIGH' region motif lies at 10-20; sequence PSPTGRLHVGN. A 'KMSKS' region motif is present at residues 241 to 245; sequence ALSKR. Lysine 244 lines the ATP pocket.

It belongs to the class-I aminoacyl-tRNA synthetase family. Glutamate--tRNA ligase type 1 subfamily. Monomer.

Its subcellular location is the cytoplasm. The enzyme catalyses tRNA(Glu) + L-glutamate + ATP = L-glutamyl-tRNA(Glu) + AMP + diphosphate. In terms of biological role, catalyzes the attachment of glutamate to tRNA(Glu) in a two-step reaction: glutamate is first activated by ATP to form Glu-AMP and then transferred to the acceptor end of tRNA(Glu). The polypeptide is Glutamate--tRNA ligase 2 (Hyphomonas neptunium (strain ATCC 15444)).